The following is a 136-amino-acid chain: Small ribosomal subunit protein uS9 (136 aa).

The segment at 97–136 (SPDNRKPLKTEGHLSRDPRAKERRKYGLKKARKAPQFSKR) is disordered. Residues 98–116 (PDNRKPLKTEGHLSRDPRA) show a composition bias toward basic and acidic residues. Over residues 117–136 (KERRKYGLKKARKAPQFSKR) the composition is skewed to basic residues.

Belongs to the universal ribosomal protein uS9 family.

This Prochlorococcus marinus (strain MIT 9312) protein is Small ribosomal subunit protein uS9.